The following is a 156-amino-acid chain: Protein-export protein SecB (156 aa).

The protein belongs to the SecB family. In terms of assembly, homotetramer, a dimer of dimers. One homotetramer interacts with 1 SecA dimer.

The protein resides in the cytoplasm. One of the proteins required for the normal export of preproteins out of the cell cytoplasm. It is a molecular chaperone that binds to a subset of precursor proteins, maintaining them in a translocation-competent state. It also specifically binds to its receptor SecA. The protein is Protein-export protein SecB of Pectobacterium carotovorum subsp. carotovorum (strain PC1).